Here is a 937-residue protein sequence, read N- to C-terminus: AP-2 complex subunit beta (937 aa).

At Thr2 the chain carries N-acetylthreonine. Ser4 is modified (phosphoserine). Residue Lys265 is modified to N6-acetyllysine. The disordered stretch occupies residues 593–617 (LPIHHGSTDAGDSPVGTTTTTNLEQ). Polar residues predominate over residues 607–617 (VGTTTTTNLEQ). Phosphotyrosine is present on residues Tyr737 and Tyr928.

It belongs to the adaptor complexes large subunit family. In terms of assembly, adaptor protein complex 2 (AP-2) is a heterotetramer composed of two large adaptins (alpha-type subunit AP2A1 or AP2A2 and beta-type subunit AP2B1), a medium adaptin (mu-type subunit AP2M1) and a small adaptin (sigma-type subunit AP2S1). Interacts with EPN1. Interacts with EPS15; clathrin competes with EPS15. Interacts with SNAP91; clathrin competes with SNAP91. Interacts with CLTC; clathrin competes with EPS15, SNAP91 and PIP5K1C. Interacts with LDLRAP1. Interacts with AMPH and BIN1. Interacts with ARF6 (GDP-bound). Interacts (dephosphorylated at Tyr-737) with ARRB1; phosphorylation of AP2B1 at Tyr-737 disrupts the interaction. Interacts with SLC2A8. Interacts with SCYL1 and SCYL2. Interacts with TGFBR1 and TGFBR2. Interacts with PIP5K1C; clathrin competes with PIP5K1C. Interacts with DENND1B. Interacts with FCHO1. Interacts with RFTN1. Interacts with KIAA1107. Together with AP2A1 or AP2A2 and AP2M1, it interacts with ADAM10; this interaction facilitates ADAM10 endocytosis from the plasma membrane during long-term potentiation in hippocampal neurons. Expressed in the brain (at protein level).

Its subcellular location is the cell membrane. It localises to the membrane. It is found in the coated pit. In terms of biological role, component of the adaptor protein complex 2 (AP-2). Adaptor protein complexes function in protein transport via transport vesicles in different membrane traffic pathways. Adaptor protein complexes are vesicle coat components and appear to be involved in cargo selection and vesicle formation. AP-2 is involved in clathrin-dependent endocytosis in which cargo proteins are incorporated into vesicles surrounded by clathrin (clathrin-coated vesicles, CCVs) which are destined for fusion with the early endosome. The clathrin lattice serves as a mechanical scaffold but is itself unable to bind directly to membrane components. Clathrin-associated adaptor protein (AP) complexes which can bind directly to both the clathrin lattice and to the lipid and protein components of membranes are considered to be the major clathrin adaptors contributing the CCV formation. AP-2 also serves as a cargo receptor to selectively sort the membrane proteins involved in receptor-mediated endocytosis. AP-2 seems to play a role in the recycling of synaptic vesicle membranes from the presynaptic surface. AP-2 recognizes Y-X-X-[FILMV] (Y-X-X-Phi) and [ED]-X-X-X-L-[LI] endocytosis signal motifs within the cytosolic tails of transmembrane cargo molecules. AP-2 may also play a role in maintaining normal post-endocytic trafficking through the ARF6-regulated, non-clathrin pathway. During long-term potentiation in hippocampal neurons, AP-2 is responsible for the endocytosis of ADAM10. The AP-2 beta subunit acts via its C-terminal appendage domain as a scaffolding platform for endocytic accessory proteins; at least some clathrin-associated sorting proteins (CLASPs) are recognized by their [DE]-X(1,2)-F-X-X-[FL]-X-X-X-R motif. The AP-2 beta subunit binds to clathrin heavy chain, promoting clathrin lattice assembly; clathrin displaces at least some CLASPs from AP2B1 which probably then can be positioned for further coat assembly. This is AP-2 complex subunit beta (Ap2b1) from Mus musculus (Mouse).